The primary structure comprises 271 residues: Shikimate dehydrogenase (NADP(+)) (271 aa).

Residues 14 to 16 (SRS) and T61 contribute to the shikimate site. K65 (proton acceptor) is an active-site residue. Shikimate is bound by residues N86 and D102. NADP(+) contacts are provided by residues 126–130 (GAGGA), 149–154 (NRTFSR), and M213. Shikimate is bound at residue Y215. G238 provides a ligand contact to NADP(+).

The protein belongs to the shikimate dehydrogenase family. In terms of assembly, homodimer.

The catalysed reaction is shikimate + NADP(+) = 3-dehydroshikimate + NADPH + H(+). It functions in the pathway metabolic intermediate biosynthesis; chorismate biosynthesis; chorismate from D-erythrose 4-phosphate and phosphoenolpyruvate: step 4/7. Involved in the biosynthesis of the chorismate, which leads to the biosynthesis of aromatic amino acids. Catalyzes the reversible NADPH linked reduction of 3-dehydroshikimate (DHSA) to yield shikimate (SA). This Histophilus somni (strain 129Pt) (Haemophilus somnus) protein is Shikimate dehydrogenase (NADP(+)).